The following is a 202-amino-acid chain: Imidazoleglycerol-phosphate dehydratase (202 aa).

Belongs to the imidazoleglycerol-phosphate dehydratase family.

It localises to the cytoplasm. The enzyme catalyses D-erythro-1-(imidazol-4-yl)glycerol 3-phosphate = 3-(imidazol-4-yl)-2-oxopropyl phosphate + H2O. The protein operates within amino-acid biosynthesis; L-histidine biosynthesis; L-histidine from 5-phospho-alpha-D-ribose 1-diphosphate: step 6/9. The chain is Imidazoleglycerol-phosphate dehydratase from Synechococcus sp. (strain WH7803).